Reading from the N-terminus, the 517-residue chain is 2-isopropylmalate synthase (517 aa).

In terms of domain architecture, Pyruvate carboxyltransferase spans 5 to 267 (VIIFDTTLRD…HTNVRCQEIY (263 aa)). Residues Asp14, His202, His204, and Asn238 each coordinate Mn(2+). The regulatory domain stretch occupies residues 392 to 517 (RLKCFHVDSS…QRKYIKKNNN (126 aa)).

The protein belongs to the alpha-IPM synthase/homocitrate synthase family. LeuA type 1 subfamily. In terms of assembly, homodimer. Requires Mn(2+) as cofactor.

Its subcellular location is the cytoplasm. It carries out the reaction 3-methyl-2-oxobutanoate + acetyl-CoA + H2O = (2S)-2-isopropylmalate + CoA + H(+). It functions in the pathway amino-acid biosynthesis; L-leucine biosynthesis; L-leucine from 3-methyl-2-oxobutanoate: step 1/4. Catalyzes the condensation of the acetyl group of acetyl-CoA with 3-methyl-2-oxobutanoate (2-ketoisovalerate) to form 3-carboxy-3-hydroxy-4-methylpentanoate (2-isopropylmalate). The chain is 2-isopropylmalate synthase from Blochmanniella pennsylvanica (strain BPEN).